Reading from the N-terminus, the 350-residue chain is Protein pelota homolog (350 aa).

The protein belongs to the eukaryotic release factor 1 family. Pelota subfamily. As to quaternary structure, monomer. Requires a divalent metal cation as cofactor.

Its subcellular location is the cytoplasm. Functionally, may function in recognizing stalled ribosomes, interact with stem-loop structures in stalled mRNA molecules, and effect endonucleolytic cleavage of the mRNA. May play a role in the release non-functional ribosomes and degradation of damaged mRNAs. Has endoribonuclease activity. The chain is Protein pelota homolog from Methanosarcina mazei (strain ATCC BAA-159 / DSM 3647 / Goe1 / Go1 / JCM 11833 / OCM 88) (Methanosarcina frisia).